The primary structure comprises 200 residues: Vacuolar iron transporter homolog 3 (200 aa).

The Cytoplasmic portion of the chain corresponds to 1-31; it reads MESHNTLNLDMEKDQEKAFDYSKRAQWLRAA. A helical transmembrane segment spans residues 32-52; the sequence is VLGANDGLVSTASLMMGVGAV. The Vacuolar segment spans residues 53–59; that stretch reads KQNVKIM. Residues 60–80 traverse the membrane as a helical segment; it reads ILTGFAGLVAGACSMAIGEFV. The Cytoplasmic portion of the chain corresponds to 81–113; sequence SVYSQYDIEVAQMKRETGGEIEKEKLPSPTQAA. The helical transmembrane segment at 114–134 threads the bilayer; it reads AASALAFSLGAMVPLLAAAFV. Residues 135–140 are Vacuolar-facing; it reads KEYKVR. Residues 141–161 traverse the membrane as a helical segment; it reads IGAIVAAVTLALVMFGWLGAV. At 162–173 the chain is on the cytoplasmic side; it reads LGKAPVVKSSLR. A helical transmembrane segment spans residues 174–194; sequence VLVGGWLAMAITYGFTKLIGS. Topologically, residues 195 to 200 are vacuolar; the sequence is HSHMYV.

Belongs to the CCC1 family.

The protein localises to the vacuole membrane. It catalyses the reaction Fe(2+)(in) = Fe(2+)(out). Functionally, probable vacuolar iron transporter that may be involved in the regulation of iron distribution throughout the plant. The polypeptide is Vacuolar iron transporter homolog 3 (Arabidopsis thaliana (Mouse-ear cress)).